Reading from the N-terminus, the 427-residue chain is tRNA(Ile)-lysidine synthase (427 aa).

Residue 18-23 (SGGLDS) coordinates ATP.

Belongs to the tRNA(Ile)-lysidine synthase family.

Its subcellular location is the cytoplasm. The catalysed reaction is cytidine(34) in tRNA(Ile2) + L-lysine + ATP = lysidine(34) in tRNA(Ile2) + AMP + diphosphate + H(+). In terms of biological role, ligates lysine onto the cytidine present at position 34 of the AUA codon-specific tRNA(Ile) that contains the anticodon CAU, in an ATP-dependent manner. Cytidine is converted to lysidine, thus changing the amino acid specificity of the tRNA from methionine to isoleucine. This chain is tRNA(Ile)-lysidine synthase, found in Pseudomonas putida (strain ATCC 47054 / DSM 6125 / CFBP 8728 / NCIMB 11950 / KT2440).